The sequence spans 534 residues: Allene oxide synthase 1, chloroplastic (534 aa).

2 disordered regions span residues 1–31 (MAST…SSYR) and 43–71 (EIPP…LPAQ). The N-terminal 69 residues, 1–69 (MASTSLSLPS…SPPVKQAKLP (69 aa)), are a transit peptide targeting the chloroplast. 2 stretches are compositionally biased toward low complexity: residues 17–31 (SHTS…SSYR) and 43–62 (EIPP…SSPP). 3 residues coordinate heme b: K149, H180, and K184. N337 and K343 together coordinate (13S)-hydroperoxy-(9Z,11E)-octadecadienoate. N337 serves as a coordination point for (13S)-hydroperoxy-(9Z,11E,15Z)-octadecatrienoate. Heme b-binding residues include K485 and C487.

The protein belongs to the cytochrome P450 family. It depends on heme b as a cofactor. As to expression, expressed in flowers. Detected in stems and roots, but not in leaves and fruits under non-inducing conditions.

It localises to the plastid. The protein resides in the chloroplast. It carries out the reaction (13S)-hydroperoxy-(9Z,11E,15Z)-octadecatrienoate = (9Z,13S,15Z)-12,13-epoxyoctadeca-9,11,15-trienoate + H2O. It catalyses the reaction (13S)-hydroperoxy-(9Z,11E)-octadecadienoate = (9Z,13S)-12,13-epoxyoctadeca-9,11-dienoate + H2O. Its function is as follows. Cytochrome P450 of the CYP74A subfamily involved in the biosynthesis of jasmonic acid from lipoxygenase-derived hydroperoxides of free fatty acids. Catalyzes the synthesis of unstable allene oxide, which is further converted spontaneously by hydrolysis or cyclization. Can use 13S-hydroperoxy-9(Z),11(E),15(Z)-octadecatrienoic acid (13-HPOT) and 13S-hydroperoxy-9(Z),11(E)-octadecadienoic acid (13-HPOD) as substrates. This Solanum lycopersicum (Tomato) protein is Allene oxide synthase 1, chloroplastic.